The sequence spans 113 residues: Transcription initiation factor IIA subunit 2 (113 aa).

Belongs to the TFIIA subunit 2 family. In terms of assembly, TFIIA is a heterodimer of the large unprocessed subunit 1 and a small subunit gamma. It was originally believed to be a heterotrimer of an alpha, a beta and a gamma subunit.

It localises to the nucleus. Its function is as follows. TFIIA is a component of the transcription machinery of RNA polymerase II and plays an important role in transcriptional activation. TFIIA in a complex with TBP mediates transcriptional activity. The sequence is that of Transcription initiation factor IIA subunit 2 from Caenorhabditis elegans.